A 499-amino-acid chain; its full sequence is MELSEPIVENGETEMSPEESWEHKEEISEAEPGGGSLGDGRPPEESAHEMMEEEEEIPKPKSVVAPPGAPKKEHVNVVFIGHVDAGKSTIGGQIMYLTGMVDKRTLEKYEREAKEKNRETWYLSWALDTNQEERDKGKTVEVGRAYFETEKKHFTILDAPGHKSFVPNMIGGASQADLAVLVISARKGEFETGFEKGGQTREHAMLAKTAGVKHLIVLINKMDDPTVNWSNERYEECKEKLVPFLKKVGFNPKKDIHFMPCSGLTGANLKEQSDFCPWYIGLPFIPYLDNLPNFNRSVDGPIRLPIVDKYKDMGTVVLGKLESGSICKGQQLVMMPNKHNVEVLGILSDDVETDTVAPGENLKIRLKGIEEEEILPGFILCDPNNLCHSGRTFDAQIVIIEHKSIICPGYNAVLHIHTCIEEVEITALICLVDKKSGEKSKTRPRFVKQDQVCIARLRTAGTICLETFKDFPQMGRFTLRDEGKTIAIGKVLKLVPEKD.

Residues 1 to 69 (MELSEPIVEN…PKSVVAPPGA (69 aa)) are disordered. The segment covering 41–50 (RPPEESAHEM) has biased composition (basic and acidic residues). Positions 72–298 (KEHVNVVFIG…DNLPNFNRSV (227 aa)) constitute a tr-type G domain. The tract at residues 81-88 (GHVDAGKS) is G1. 84-89 (DAGKST) lines the GTP pocket. The G2 stretch occupies residues 137-141 (GKTVE). The tract at residues 158–161 (DAPG) is G3. GTP is bound by residues 220-223 (NKMD) and 262-264 (SGL). The segment at 220–223 (NKMD) is G4. The segment at 262–264 (SGL) is G5.

Belongs to the TRAFAC class translation factor GTPase superfamily. Classic translation factor GTPase family. ERF3 subfamily. In terms of assembly, component of the eRF1-eRF3-GTP ternary complex, composed of ETF1/ERF1 and ERF3 (GSPT1/ERF3A or GSPT2/ERF3B) and GTP. Component of the transient SURF (SMG1-UPF1-eRF1-eRF3) complex. The ETF1-GSPT1 complex interacts with JMJD4. Interacts with PABPC1. Interacts with SHFL.

The enzyme catalyses GTP + H2O = GDP + phosphate + H(+). Its function is as follows. GTPase component of the eRF1-eRF3-GTP ternary complex, a ternary complex that mediates translation termination in response to the termination codons UAA, UAG and UGA. GSPT1/ERF3A mediates ETF1/ERF1 delivery to stop codons: The eRF1-eRF3-GTP complex binds to a stop codon in the ribosomal A-site. GTP hydrolysis by GSPT1/ERF3A induces a conformational change that leads to its dissociation, permitting ETF1/ERF1 to accommodate fully in the A-site. Component of the transient SURF complex which recruits UPF1 to stalled ribosomes in the context of nonsense-mediated decay (NMD) of mRNAs containing premature stop codons. Required for SHFL-mediated translation termination which inhibits programmed ribosomal frameshifting (-1PRF) of mRNA from viruses and cellular genes. The protein is Eukaryotic peptide chain release factor GTP-binding subunit ERF3A (GSPT1) of Homo sapiens (Human).